The following is a 470-amino-acid chain: Uronate isomerase (470 aa).

This sequence belongs to the metallo-dependent hydrolases superfamily. Uronate isomerase family.

It catalyses the reaction D-glucuronate = D-fructuronate. The enzyme catalyses aldehydo-D-galacturonate = keto-D-tagaturonate. Its pathway is carbohydrate metabolism; pentose and glucuronate interconversion. This chain is Uronate isomerase, found in Cutibacterium acnes (strain DSM 16379 / KPA171202) (Propionibacterium acnes).